The primary structure comprises 119 residues: uncharacterized protein (119 aa).

The N-terminal stretch at 1-30 is a signal peptide; the sequence is MCPECFFLMLCFCGYCSSSSSSFRSSPVYG.

This is an uncharacterized protein from Escherichia coli (strain UTI89 / UPEC).